The primary structure comprises 123 residues: Ribosome-binding factor A (123 aa).

Belongs to the RbfA family. Monomer. Binds 30S ribosomal subunits, but not 50S ribosomal subunits or 70S ribosomes.

The protein resides in the cytoplasm. Functionally, one of several proteins that assist in the late maturation steps of the functional core of the 30S ribosomal subunit. Associates with free 30S ribosomal subunits (but not with 30S subunits that are part of 70S ribosomes or polysomes). Required for efficient processing of 16S rRNA. May interact with the 5'-terminal helix region of 16S rRNA. The polypeptide is Ribosome-binding factor A (Neisseria gonorrhoeae (strain NCCP11945)).